The following is a 548-amino-acid chain: Beta-lactamase-like protein 2 (548 aa).

Residues 1–24 form the signal peptide; the sequence is MKIMNKQSITIFLIICFLINLILS. N-linked (GlcNAc...) asparagine glycans are attached at residues asparagine 237, asparagine 258, asparagine 443, and asparagine 459.

The protein belongs to the beta-lactamase family.

It is found in the secreted. The sequence is that of Beta-lactamase-like protein 2 from Dictyostelium discoideum (Social amoeba).